We begin with the raw amino-acid sequence, 121 residues long: Putative membrane protein insertion efficiency factor (121 aa).

It belongs to the UPF0161 family.

It is found in the cell membrane. Could be involved in insertion of integral membrane proteins into the membrane. The polypeptide is Putative membrane protein insertion efficiency factor (Rhodococcus opacus (strain B4)).